The sequence spans 478 residues: Phosphoglycerate kinase 2, chloroplastic (478 aa).

The N-terminal 74 residues, 1–74 (MASTAATAAL…GKGARGVITM (74 aa)), are a transit peptide targeting the chloroplast. The residue at position 78 (Ser-78) is a Phosphoserine. Residues Ala-96, Asp-97, Asn-99, Arg-113, Thr-135, His-136, Gly-138, Arg-139, Arg-194, His-226, and Arg-227 each contribute to the (2R)-3-phosphoglycerate site. Position 272 (Gly-272) interacts with ADP. Position 272 (Gly-272) interacts with CDP. Lys-274 and Lys-278 together coordinate AMP. ATP is bound at residue Lys-278. Gly-296 is an ADP binding site. CDP is bound at residue Gly-296. 2 residues coordinate AMP: Gly-297 and Gly-369. ATP-binding residues include Gly-297 and Gly-369. The CDP site is built by Gly-394 and Phe-399. Phe-399 is an ADP binding site. Residue Glu-400 participates in AMP binding. ATP contacts are provided by Glu-400, Asp-431, and Ser-432. Asp-431 serves as a coordination point for Mg(2+).

It belongs to the phosphoglycerate kinase family. Monomer. Requires Mg(2+) as cofactor.

The protein localises to the plastid. Its subcellular location is the chloroplast. The catalysed reaction is (2R)-3-phosphoglycerate + ATP = (2R)-3-phospho-glyceroyl phosphate + ADP. Its pathway is carbohydrate biosynthesis; Calvin cycle. The polypeptide is Phosphoglycerate kinase 2, chloroplastic (Arabidopsis thaliana (Mouse-ear cress)).